We begin with the raw amino-acid sequence, 119 residues long: V-type proton ATPase subunit F (119 aa).

Belongs to the V-ATPase F subunit family. In terms of assembly, V-ATPase is a heteromultimeric enzyme made up of two complexes: the ATP-hydrolytic V1 complex and the proton translocation V0 complex. The V1 complex consists of three catalytic AB heterodimers that form a heterohexamer, three peripheral stalks each consisting of EG heterodimers, one central rotor including subunits D and F, and the regulatory subunits C and H. The proton translocation complex V0 consists of the proton transport subunit a, a ring of proteolipid subunits c9c'', rotary subunit d, subunits e and f, and the accessory subunits ATP6AP1/Ac45 and ATP6AP2/PRR.

It is found in the cytoplasmic vesicle. The protein resides in the secretory vesicle. Its subcellular location is the synaptic vesicle membrane. It localises to the clathrin-coated vesicle membrane. Functionally, subunit of the V1 complex of vacuolar(H+)-ATPase (V-ATPase), a multisubunit enzyme composed of a peripheral complex (V1) that hydrolyzes ATP and a membrane integral complex (V0) that translocates protons. V-ATPase is responsible for acidifying and maintaining the pH of intracellular compartments and in some cell types, is targeted to the plasma membrane, where it is responsible for acidifying the extracellular environment. The polypeptide is V-type proton ATPase subunit F (Atp6v1f) (Mus musculus (Mouse)).